A 376-amino-acid polypeptide reads, in one-letter code: Flagellar P-ring protein (376 aa).

The signal sequence occupies residues 1-29 (MTQRPFSLLSHLGRICLAAAMLAALPAQA).

Belongs to the FlgI family. As to quaternary structure, the basal body constitutes a major portion of the flagellar organelle and consists of four rings (L,P,S, and M) mounted on a central rod.

The protein localises to the periplasm. The protein resides in the bacterial flagellum basal body. Assembles around the rod to form the L-ring and probably protects the motor/basal body from shearing forces during rotation. The sequence is that of Flagellar P-ring protein from Bordetella avium (strain 197N).